We begin with the raw amino-acid sequence, 359 residues long: Phosphoserine aminotransferase (359 aa).

Arginine 41 serves as a coordination point for L-glutamate. Residues 75–76 (AS), tryptophan 101, threonine 152, aspartate 171, and glutamine 194 contribute to the pyridoxal 5'-phosphate site. Lysine 195 is modified (N6-(pyridoxal phosphate)lysine). 236–237 (NT) contributes to the pyridoxal 5'-phosphate binding site.

This sequence belongs to the class-V pyridoxal-phosphate-dependent aminotransferase family. SerC subfamily. As to quaternary structure, homodimer. It depends on pyridoxal 5'-phosphate as a cofactor.

The protein resides in the cytoplasm. The enzyme catalyses O-phospho-L-serine + 2-oxoglutarate = 3-phosphooxypyruvate + L-glutamate. It carries out the reaction 4-(phosphooxy)-L-threonine + 2-oxoglutarate = (R)-3-hydroxy-2-oxo-4-phosphooxybutanoate + L-glutamate. Its pathway is amino-acid biosynthesis; L-serine biosynthesis; L-serine from 3-phospho-D-glycerate: step 2/3. It functions in the pathway cofactor biosynthesis; pyridoxine 5'-phosphate biosynthesis; pyridoxine 5'-phosphate from D-erythrose 4-phosphate: step 3/5. Functionally, catalyzes the reversible conversion of 3-phosphohydroxypyruvate to phosphoserine and of 3-hydroxy-2-oxo-4-phosphonooxybutanoate to phosphohydroxythreonine. The protein is Phosphoserine aminotransferase of Acinetobacter baumannii (strain AB307-0294).